The sequence spans 145 residues: Small ribosomal subunit protein uS19 (145 aa).

It belongs to the universal ribosomal protein uS19 family. As to quaternary structure, component of the small ribosomal subunit.

The protein resides in the cytoplasm. Functionally, component of the small ribosomal subunit. The ribosome is a large ribonucleoprotein complex responsible for the synthesis of proteins in the cell. This chain is Small ribosomal subunit protein uS19 (rps15), found in Xenopus laevis (African clawed frog).